We begin with the raw amino-acid sequence, 497 residues long: Acetyl-coenzyme A carboxylase carboxyl transferase subunit beta, chloroplastic (497 aa).

Residues 230–497 enclose the CoA carboxyltransferase N-terminal domain; the sequence is LWIQCENCYG…FFPLNQNSIK (268 aa). Residues Cys234, Cys237, Cys253, and Cys256 each coordinate Zn(2+). The C4-type zinc finger occupies 234–256; it reads CENCYGLNYKKFFRSKMNICEQC.

Belongs to the AccD/PCCB family. As to quaternary structure, acetyl-CoA carboxylase is a heterohexamer composed of biotin carboxyl carrier protein, biotin carboxylase and 2 subunits each of ACCase subunit alpha and ACCase plastid-coded subunit beta (accD). Zn(2+) is required as a cofactor.

The protein resides in the plastid. It localises to the chloroplast stroma. It carries out the reaction N(6)-carboxybiotinyl-L-lysyl-[protein] + acetyl-CoA = N(6)-biotinyl-L-lysyl-[protein] + malonyl-CoA. It participates in lipid metabolism; malonyl-CoA biosynthesis; malonyl-CoA from acetyl-CoA: step 1/1. Functionally, component of the acetyl coenzyme A carboxylase (ACC) complex. Biotin carboxylase (BC) catalyzes the carboxylation of biotin on its carrier protein (BCCP) and then the CO(2) group is transferred by the transcarboxylase to acetyl-CoA to form malonyl-CoA. This is Acetyl-coenzyme A carboxylase carboxyl transferase subunit beta, chloroplastic from Platanus occidentalis (Sycamore).